Reading from the N-terminus, the 373-residue chain is Mating-type protein A-2 (373 aa).

Residues 1 to 22 form a disordered region; that stretch reads MNLLNMQPKRSEQPAMFEENRA.

To P.anserina SMR1.

In terms of biological role, required, together with mating-type protein A-3, for efficient ascospore formation. This is Mating-type protein A-2 (matA-2) from Neurospora crassa (strain ATCC 24698 / 74-OR23-1A / CBS 708.71 / DSM 1257 / FGSC 987).